We begin with the raw amino-acid sequence, 58 residues long: Large ribosomal subunit protein bL32 (58 aa).

Belongs to the bacterial ribosomal protein bL32 family.

This Prochlorococcus marinus (strain MIT 9515) protein is Large ribosomal subunit protein bL32.